The following is a 271-amino-acid chain: Probable WRKY transcription factor 69 (271 aa).

2 disordered regions span residues 1–47 (MHRR…NVEK) and 130–166 (PSSSANTKSHHRSSVVLKTAKKEEEYEEEEEELTVTA). Positions 9–18 (ESDDEEDETY) are enriched in acidic residues. Residues 64 to 130 (GEVYPPSDSW…YACDHNHPFP (67 aa)) constitute a DNA-binding region (WRKY).

It belongs to the WRKY group II-e family.

The protein resides in the nucleus. Functionally, transcription factor. Interacts specifically with the W box (5'-(T)TGAC[CT]-3'), a frequently occurring elicitor-responsive cis-acting element. This chain is Probable WRKY transcription factor 69 (WRKY69), found in Arabidopsis thaliana (Mouse-ear cress).